Consider the following 423-residue polypeptide: UDP-N-acetylglucosamine 1-carboxyvinyltransferase (423 aa).

22–23 (KN) is a binding site for phosphoenolpyruvate. Arg-93 is a binding site for UDP-N-acetyl-alpha-D-glucosamine. Residue Cys-117 is the Proton donor of the active site. Residue Cys-117 is modified to 2-(S-cysteinyl)pyruvic acid O-phosphothioketal. UDP-N-acetyl-alpha-D-glucosamine is bound by residues 122-126 (RPVDL), Asp-308, and Ile-330.

It belongs to the EPSP synthase family. MurA subfamily.

The protein resides in the cytoplasm. The enzyme catalyses phosphoenolpyruvate + UDP-N-acetyl-alpha-D-glucosamine = UDP-N-acetyl-3-O-(1-carboxyvinyl)-alpha-D-glucosamine + phosphate. The protein operates within cell wall biogenesis; peptidoglycan biosynthesis. Functionally, cell wall formation. Adds enolpyruvyl to UDP-N-acetylglucosamine. In Maricaulis maris (strain MCS10) (Caulobacter maris), this protein is UDP-N-acetylglucosamine 1-carboxyvinyltransferase.